Reading from the N-terminus, the 173-residue chain is Transcription factor E (173 aa).

One can recognise an HTH TFE/IIEalpha-type domain in the interval 3 to 86; that stretch reads DDPLVKSLLT…SWKFEEQEVI (84 aa).

The protein belongs to the TFE family. As to quaternary structure, monomer. Interaction with RNA polymerase subunits RpoF and RpoE is necessary for Tfe stimulatory transcription activity. Able to interact with Tbp and RNA polymerase in the absence of DNA promoter. Interacts both with the preinitiation and elongation complexes.

Functionally, transcription factor that plays a role in the activation of archaeal genes transcribed by RNA polymerase. Facilitates transcription initiation by enhancing TATA-box recognition by TATA-box-binding protein (Tbp), and transcription factor B (Tfb) and RNA polymerase recruitment. Not absolutely required for transcription in vitro, but particularly important in cases where Tbp or Tfb function is not optimal. It dynamically alters the nucleic acid-binding properties of RNA polymerases by stabilizing the initiation complex and destabilizing elongation complexes. Seems to translocate with the RNA polymerase following initiation and acts by binding to the non template strand of the transcription bubble in elongation complexes. The polypeptide is Transcription factor E (Methanobrevibacter smithii (strain ATCC 35061 / DSM 861 / OCM 144 / PS)).